The chain runs to 491 residues: MADDFKVVIVGGSVAGLSLAHCLERLGVSYVVLEKGSQIAPQLGASIGILPNGGRILDQLGIFRDVEDEIEPLNFAVIRYADGFSFRSQYPKALHSSYGYPVSFLERQKFIQILYDKLRGKNHVHTRKRVVSIVDGPGKALIRTDDGDEYDADMVVGADGVHSVVRSEIWRHAKEAAGTAVTEEEPNADIKYDYACVYGISVNVPHADTGVQLSSLSDGVSIHLFAGKGSKFFWFIMVRTSRDEFLELKKDSAHMARRTCEGLGSKRLSDAVYFRDVWSRCTVYQMTPLEEGVFRQWNRGRLVCIGDAIRKMAPNIGQGANMAIEDAAQLSNLIREMLASPRKASATTVEKMLRDFAAMQKARTKSMCGQSEFLVRMHANEGFGRRLLGRYLIPSLQDAPAGLAGLSIRGAVKLECAGVPSRTLGKAWEGSWGSSLRNLMYLRPRLGILSLVYVVAGLAMMYMSIYLVVPARLAAQAFDVSRDGTEGKGGG.

FAD is bound by residues Glu34, Gly48, Arg107, Asp307, and Ala320. Residues Ile448–Val468 traverse the membrane as a helical segment.

The protein belongs to the paxM FAD-dependent monooxygenase family. Requires FAD as cofactor.

The protein resides in the membrane. It participates in secondary metabolite biosynthesis. FAD-dependent monooxygenase; part of the gene cluster that mediates the biosynthesis of paspalitrems, indole-diterpene (IDT) mycotoxins that are potent tremorgens in mammals. The geranylgeranyl diphosphate (GGPP) synthase idtG is proposed to catalyze the first step in IDT biosynthesis via catalysis of a series of iterative condensations of isopentenyl diphosphate (IPP) with dimethylallyl diphosphate (DMAPP), geranyl diphosphate (GPP), and farnesyl diphosphate (FPP), to form GGPP. Condensation of indole-3-glycerol phosphate with GGPP by the prenyltransferase idtC then forms 3-geranylgeranylindole (3-GGI). Epoxidation of the two terminal alkenes of the geranylgeranyl moiety by the FAD-dependent monooxygenase idtM, and cyclization by the terpene cyclase idtB then leads to the production of paspaline. The cytochrome P450 monooxygenase idtP then catalyzes oxidative elimination of the pendant methyl group at C-12 of paspaline and generates the C-10 ketone to yield 13-desoxypaxilline. The cytochrome P450 monooxygenase idtQ may catalyze the C-13 oxidation of 13-desoxypaxilline to afford paxilline. Considering that both paspalicine and paxilline were detected in C.paspali, idtQ also catalyzes the formation of paspalinine from 13-desoxypaxilline via paspalicine as an intermediate. Finally, the alpha-prenyltransferase idtF prenylates paspalinine at the C-20 or the C-21 positions to yield paspalitrems A and C, respectively. The hydroxylation of paspalitrem A at C-32 by a still unknown oxidase affords paspalitrem B. This chain is FAD-dependent monooxygenase idtM, found in Claviceps paspali (Rye ergot fungus).